The sequence spans 344 residues: N-acetyl-gamma-glutamyl-phosphate reductase (344 aa).

Cys-150 is an active-site residue.

This sequence belongs to the NAGSA dehydrogenase family. Type 1 subfamily.

The protein localises to the cytoplasm. The enzyme catalyses N-acetyl-L-glutamate 5-semialdehyde + phosphate + NADP(+) = N-acetyl-L-glutamyl 5-phosphate + NADPH + H(+). The protein operates within amino-acid biosynthesis; L-arginine biosynthesis; N(2)-acetyl-L-ornithine from L-glutamate: step 3/4. In terms of biological role, catalyzes the NADPH-dependent reduction of N-acetyl-5-glutamyl phosphate to yield N-acetyl-L-glutamate 5-semialdehyde. This chain is N-acetyl-gamma-glutamyl-phosphate reductase, found in Pseudomonas fluorescens (strain Pf0-1).